The sequence spans 166 residues: Large ribosomal subunit protein uL10 (166 aa).

The protein belongs to the universal ribosomal protein uL10 family. As to quaternary structure, part of the ribosomal stalk of the 50S ribosomal subunit. The N-terminus interacts with L11 and the large rRNA to form the base of the stalk. The C-terminus forms an elongated spine to which L12 dimers bind in a sequential fashion forming a multimeric L10(L12)X complex.

Its function is as follows. Forms part of the ribosomal stalk, playing a central role in the interaction of the ribosome with GTP-bound translation factors. The chain is Large ribosomal subunit protein uL10 from Pseudomonas fluorescens (strain SBW25).